The following is a 315-amino-acid chain: Ribosomal RNA small subunit methyltransferase H (315 aa).

S-adenosyl-L-methionine contacts are provided by residues Gly33–His35, Asp52, Phe84, Asp106, and Gln113. The segment at Ser294–Leu315 is disordered.

It belongs to the methyltransferase superfamily. RsmH family.

The protein resides in the cytoplasm. The enzyme catalyses cytidine(1402) in 16S rRNA + S-adenosyl-L-methionine = N(4)-methylcytidine(1402) in 16S rRNA + S-adenosyl-L-homocysteine + H(+). Specifically methylates the N4 position of cytidine in position 1402 (C1402) of 16S rRNA. The chain is Ribosomal RNA small subunit methyltransferase H from Lactobacillus johnsonii (strain CNCM I-12250 / La1 / NCC 533).